Consider the following 269-residue polypeptide: 5'-nucleotidase SurE (269 aa).

A divalent metal cation contacts are provided by Asp-11, Asp-12, Ser-43, and Asn-101.

It belongs to the SurE nucleotidase family. The cofactor is a divalent metal cation.

The protein resides in the cytoplasm. The catalysed reaction is a ribonucleoside 5'-phosphate + H2O = a ribonucleoside + phosphate. Nucleotidase that shows phosphatase activity on nucleoside 5'-monophosphates. This is 5'-nucleotidase SurE from Prochlorococcus marinus (strain MIT 9211).